Here is a 332-residue protein sequence, read N- to C-terminus: Anthranilate phosphoribosyltransferase (332 aa).

5-phospho-alpha-D-ribose 1-diphosphate-binding positions include G79, 82–83 (GD), T87, 89–92 (NIST), 107–115 (KHGNRSVSS), and S119. An anthranilate-binding site is contributed by G79. Mg(2+) is bound at residue S91. N110 contributes to the anthranilate binding site. R165 lines the anthranilate pocket. Mg(2+)-binding residues include D223 and E224.

It belongs to the anthranilate phosphoribosyltransferase family. Homodimer. Mg(2+) serves as cofactor.

The catalysed reaction is N-(5-phospho-beta-D-ribosyl)anthranilate + diphosphate = 5-phospho-alpha-D-ribose 1-diphosphate + anthranilate. The protein operates within amino-acid biosynthesis; L-tryptophan biosynthesis; L-tryptophan from chorismate: step 2/5. Functionally, catalyzes the transfer of the phosphoribosyl group of 5-phosphorylribose-1-pyrophosphate (PRPP) to anthranilate to yield N-(5'-phosphoribosyl)-anthranilate (PRA). The polypeptide is Anthranilate phosphoribosyltransferase (Vibrio vulnificus (strain YJ016)).